We begin with the raw amino-acid sequence, 26 residues long: Beta-hexosaminidase (26 aa).

Glycosylated. As to expression, detected in dry seeds and cotyledons.

The enzyme catalyses Hydrolysis of terminal non-reducing N-acetyl-D-hexosamine residues in N-acetyl-beta-D-hexosaminides.. Its activity is regulated as follows. Inhibited by AgNO(3) at a concentration of 0.1 mM. Strongly inhibited by CdCl(2), ZnCl(2) and FeCl(3) and moderately by CoCl(2), CuSO(4) and NiCl(2) at 10 mM concentration. CaCl(2), MgCl(2), MnSO(4) and KI also have a slight inhibitory effect of 20%-25% at 10 mM concentration. Activated to a small extent by MgCl(2) at 0.1 mM concentration but inhibited with increasing concentration. Not affected by carbohydrates such as fucose, galactose and glucose but displays a slight decrease in activity up to 25% with lactose, alpha-mannose and N-acetyl-galactosamine (GalNAc). In terms of biological role, has hexosaminidase activity. Active with both p-nitrophenyl-beta-D-N-acetylglucosamine (pNP-GlcNAc) and p-nitrophenyl-beta-D-N-acetylgalactosamine (pNP-GalNAc). Not active toward p-nitrophenyl-beta-D-N,N'-diacetylchitobiose (pNP-(GlcNAc)2) or p-nitrophenyl-beta-D-N,N',N''-triacetylchitobiose (pNP-(GlcNAc)3). Removes terminal GlcNAc and may be involved in storage protein degradation. The chain is Beta-hexosaminidase from Lupinus albus (White lupine).